We begin with the raw amino-acid sequence, 493 residues long: UPF0699 transmembrane protein YdbT (493 aa).

Transmembrane regions (helical) follow at residues 18 to 38, 46 to 66, 188 to 208, 232 to 252, 370 to 390, and 393 to 413; these read CHTI…VYIV, FYGA…SIIK, LMAA…FALI, IGIY…FSIA, VIFS…WGYL, and ILLP…AWTI.

The protein belongs to the UPF0699 family.

The protein resides in the cell membrane. The chain is UPF0699 transmembrane protein YdbT (ydbT) from Bacillus subtilis (strain 168).